We begin with the raw amino-acid sequence, 148 residues long: Large ribosomal subunit protein uL15 (148 aa).

A compositionally biased stretch (basic residues) spans 1-30 (MPSRLRKTRKLRGHVSHGHGRIGKHRKHPG). The disordered stretch occupies residues 1 to 38 (MPSRLRKTRKLRGHVSHGHGRIGKHRKHPGGRGNAGGL). H39 is subject to (3S)-3-hydroxyhistidine. An N6-acetyllysine mark is found at K47 and K55. The residue at position 68 (S68) is a Phosphoserine. K110 is modified (N6-acetyllysine).

It belongs to the universal ribosomal protein uL15 family. As to quaternary structure, component of the large ribosomal subunit. Hydroxylated on His-39 by MINA.

It localises to the cytoplasm. Component of the large ribosomal subunit. The ribosome is a large ribonucleoprotein complex responsible for the synthesis of proteins in the cell. This Homo sapiens (Human) protein is Large ribosomal subunit protein uL15 (RPL27A).